The primary structure comprises 243 residues: tRNA pseudouridine synthase A (243 aa).

D53 serves as the catalytic Nucleophile. Residue Y111 coordinates substrate.

It belongs to the tRNA pseudouridine synthase TruA family. Homodimer.

The enzyme catalyses uridine(38/39/40) in tRNA = pseudouridine(38/39/40) in tRNA. Formation of pseudouridine at positions 38, 39 and 40 in the anticodon stem and loop of transfer RNAs. The sequence is that of tRNA pseudouridine synthase A from Chlorobium limicola (strain DSM 245 / NBRC 103803 / 6330).